We begin with the raw amino-acid sequence, 251 residues long: Imidazole glycerol phosphate synthase subunit HisF (251 aa).

Residues Asp-11 and Asp-130 contribute to the active site.

This sequence belongs to the HisA/HisF family. Heterodimer of HisH and HisF.

The protein resides in the cytoplasm. The enzyme catalyses 5-[(5-phospho-1-deoxy-D-ribulos-1-ylimino)methylamino]-1-(5-phospho-beta-D-ribosyl)imidazole-4-carboxamide + L-glutamine = D-erythro-1-(imidazol-4-yl)glycerol 3-phosphate + 5-amino-1-(5-phospho-beta-D-ribosyl)imidazole-4-carboxamide + L-glutamate + H(+). It functions in the pathway amino-acid biosynthesis; L-histidine biosynthesis; L-histidine from 5-phospho-alpha-D-ribose 1-diphosphate: step 5/9. IGPS catalyzes the conversion of PRFAR and glutamine to IGP, AICAR and glutamate. The HisF subunit catalyzes the cyclization activity that produces IGP and AICAR from PRFAR using the ammonia provided by the HisH subunit. The protein is Imidazole glycerol phosphate synthase subunit HisF of Chlorobaculum parvum (strain DSM 263 / NCIMB 8327) (Chlorobium vibrioforme subsp. thiosulfatophilum).